Reading from the N-terminus, the 256-residue chain is MASATLAFSCSSLCATLKLPQNLNPLLLNVPPLSKPFSGVVSPPSLSRLSLLPVAAKRRRFQEIPEELKAEFEEFQRPPNQKPQLSDVLPDDFQAPEPGTPEYNDIINQFLPKKGPPPPREEIFAVVVIGSRQYIVIPGRWIYTQRLKGATVNDKIVLNKVLLVGTKASTYIGTPIVTNAAVHAVVEEQLLDDKVIVFKYKKKKNYRRNIGHRQPITRIKITGITGYEDYPASTLEAEVEAKEEAEAEAEAEAVPV.

A chloroplast-targeting transit peptide spans 1-55 (MASATLAFSCSSLCATLKLPQNLNPLLLNVPPLSKPFSGVVSPPSLSRLSLLPVA).

Component of the chloroplast large ribosomal subunit (LSU). Mature 70S chloroplast ribosomes of higher plants consist of a small (30S) and a large (50S) subunit. The 30S small subunit contains 1 molecule of ribosomal RNA (16S rRNA) and 24 different proteins. The 50S large subunit contains 3 rRNA molecules (23S, 5S and 4.5S rRNA) and 33 different proteins.

The protein localises to the plastid. It is found in the chloroplast. Its function is as follows. Component of the chloroplast ribosome (chloro-ribosome), a dedicated translation machinery responsible for the synthesis of chloroplast genome-encoded proteins, including proteins of the transcription and translation machinery and components of the photosynthetic apparatus. This chain is Large ribosomal subunit protein bL21c (RPL21), found in Spinacia oleracea (Spinach).